The chain runs to 311 residues: Porphobilinogen deaminase (311 aa).

C243 is modified (S-(dipyrrolylmethanemethyl)cysteine).

It belongs to the HMBS family. As to quaternary structure, monomer. The cofactor is dipyrromethane.

It catalyses the reaction 4 porphobilinogen + H2O = hydroxymethylbilane + 4 NH4(+). Its pathway is porphyrin-containing compound metabolism; protoporphyrin-IX biosynthesis; coproporphyrinogen-III from 5-aminolevulinate: step 2/4. In terms of biological role, tetrapolymerization of the monopyrrole PBG into the hydroxymethylbilane pre-uroporphyrinogen in several discrete steps. The chain is Porphobilinogen deaminase from Aliivibrio salmonicida (strain LFI1238) (Vibrio salmonicida (strain LFI1238)).